Here is a 564-residue protein sequence, read N- to C-terminus: Beta-hexosaminidase subunit B2 (564 aa).

The signal sequence occupies residues 1-19 (MKLKFIFLILFFIIGNSIG). 4 N-linked (GlcNAc...) asparagine glycosylation sites follow: asparagine 43, asparagine 84, asparagine 303, and asparagine 347. Glutamate 357 serves as the catalytic Proton donor. Residues asparagine 364, asparagine 377, asparagine 439, asparagine 524, and asparagine 551 are each glycosylated (N-linked (GlcNAc...) asparagine).

Belongs to the glycosyl hydrolase 20 family.

It is found in the lysosome. The enzyme catalyses Hydrolysis of terminal non-reducing N-acetyl-D-hexosamine residues in N-acetyl-beta-D-hexosaminides.. Its function is as follows. Responsible for the degradation of GM2 gangliosides, and a variety of other molecules containing terminal N-acetyl hexosamines. This Dictyostelium discoideum (Social amoeba) protein is Beta-hexosaminidase subunit B2 (hexb2).